Consider the following 181-residue polypeptide: MATSIDLVEAERRYRTICSSWNECITFQQHQAAVEEYKELHQLLFPSSCQYIPGWLTPEQREAKKQAEIAKKLRKLELKEEFKFLIDSALSKSLTKISDQDINDLPWTFMSTLNGLVNPGKFGISNIFAGQKDISVQSKEKFELHVRRALDETFHWCIFPEKLDDFTKTFSEKLSFRLKYS.

This is an uncharacterized protein from Acanthamoeba polyphaga (Amoeba).